We begin with the raw amino-acid sequence, 1798 residues long: Laminin subunit beta-2 (1798 aa).

Positions 1–32 (MELTSRERGRGQPLPWELRLGLLLSVLAATLA) are cleaved as a signal peptide. One can recognise a Laminin N-terminal domain in the interval 43–282 (SRGSCYPATG…ALYELVVRGN (240 aa)). A glycan (N-linked (GlcNAc...) asparagine) is linked at asparagine 248. 19 cysteine pairs are disulfide-bonded: cysteine 283–cysteine 292, cysteine 285–cysteine 310, cysteine 312–cysteine 321, cysteine 324–cysteine 344, cysteine 347–cysteine 356, cysteine 349–cysteine 374, cysteine 377–cysteine 386, cysteine 389–cysteine 407, cysteine 410–cysteine 423, cysteine 412–cysteine 438, cysteine 440–cysteine 449, cysteine 452–cysteine 467, cysteine 470–cysteine 484, cysteine 472–cysteine 491, cysteine 493–cysteine 502, cysteine 505–cysteine 519, cysteine 522–cysteine 534, cysteine 524–cysteine 541, and cysteine 543–cysteine 552. 4 Laminin EGF-like domains span residues 283–346 (CFCY…ACRK), 347–409 (CECH…VCRS), 410–469 (CDCD…GCRR), and 470–521 (CQCN…GCRP). Asparagine 368 carries N-linked (GlcNAc...) asparagine glycosylation. The 31-residue stretch at 522–552 (CDCDVGGALDPQCDEGTGQCHCRQHMVGRRC) folds into the Laminin EGF-like 5; truncated domain. The region spanning 561-777 (RPFLDHLIWE…LLISLSTLIY (217 aa)) is the Laminin IV type B domain. 32 cysteine pairs are disulfide-bonded: cysteine 783–cysteine 795, cysteine 785–cysteine 802, cysteine 804–cysteine 813, cysteine 816–cysteine 828, cysteine 831–cysteine 843, cysteine 833–cysteine 850, cysteine 852–cysteine 861, cysteine 864–cysteine 874, cysteine 877–cysteine 886, cysteine 879–cysteine 893, cysteine 896–cysteine 905, cysteine 908–cysteine 924, cysteine 927–cysteine 943, cysteine 929–cysteine 954, cysteine 956–cysteine 965, cysteine 968–cysteine 983, cysteine 986–cysteine 1000, cysteine 988–cysteine 1007, cysteine 1010–cysteine 1019, cysteine 1022–cysteine 1035, cysteine 1038–cysteine 1058, cysteine 1040–cysteine 1065, cysteine 1067–cysteine 1076, cysteine 1079–cysteine 1092, cysteine 1095–cysteine 1107, cysteine 1097–cysteine 1114, cysteine 1116–cysteine 1125, cysteine 1128–cysteine 1140, cysteine 1143–cysteine 1155, cysteine 1145–cysteine 1162, cysteine 1164–cysteine 1173, and cysteine 1176–cysteine 1187. 8 Laminin EGF-like domains span residues 783-830 (CQCN…GCQA), 831-876 (CQCS…SCRP), 877-926 (CVCN…QCRP), 927-985 (CPCP…RCQL), 986-1037 (CECS…SCHR), 1038-1094 (CTCN…GCQP), 1095-1142 (CACH…QCHA), and 1143-1189 (CDCD…ACHP). Residue asparagine 1085 is glycosylated (N-linked (GlcNAc...) asparagine). A domain II region spans residues 1190-1409 (CHACFGDWDR…LSLTDINELV (220 aa)). N-linked (GlcNAc...) asparagine glycosylation is found at asparagine 1249, asparagine 1308, and asparagine 1348. Positions 1253-1319 (ASTAQLVEAT…TLRQLDQHLD (67 aa)) form a coiled coil. A disordered region spans residues 1338–1364 (SQSAEAERRANTSALAVPSPVSNSASA). The span at 1350 to 1363 (SALAVPSPVSNSAS) shows a compositional bias: low complexity. The tract at residues 1410 to 1442 (CGAPGDAPCATSPCGGAGCRDEDGQPRCGGLSC) is domain alpha. Residues 1443–1798 (NGAAATADLA…LQVQIYNTCQ (356 aa)) form a domain I region. Residues 1472–1526 (SILSRVAETRRQASEAQQRAQAALDKANASRGQVEQANQELQELIQSVKDFLNQE) are a coiled coil. Asparagine 1499 carries N-linked (GlcNAc...) asparagine glycosylation. Serine 1532 bears the Phosphoserine; by FAM20C mark. Positions 1577–1790 (VGDVRRAEQL…RSVLQAINLQ (214 aa)) form a coiled coil.

As to quaternary structure, laminin is a complex glycoprotein, consisting of three different polypeptide chains (alpha, beta, gamma), which are bound to each other by disulfide bonds into a cross-shaped molecule comprising one long and three short arms with globules at each end. Beta-2 is a subunit of laminin-3 (laminin-121 or S-laminin), laminin-4 (laminin-221 or S-merosin), laminin-7 (laminin-321 or KS-laminin), laminin-9 (laminin-421), laminin-11 (laminin-521), laminin-14 (laminin-423) and laminin-15 (laminin-523).

It localises to the secreted. The protein localises to the extracellular space. Its subcellular location is the extracellular matrix. The protein resides in the basement membrane. Its function is as follows. Binding to cells via a high affinity receptor, laminin is thought to mediate the attachment, migration and organization of cells into tissues during embryonic development by interacting with other extracellular matrix components. This Homo sapiens (Human) protein is Laminin subunit beta-2 (LAMB2).